We begin with the raw amino-acid sequence, 212 residues long: ER lumen protein-retaining receptor 1 (212 aa).

The Lumenal segment spans residues 1–4; it reads MNLF. The helical transmembrane segment at 5-24 threads the bilayer; it reads RFLGDLSHLLAIILLLLKIW. Topologically, residues 25–32 are cytoplasmic; the sequence is KSRSCAGI. The helical transmembrane segment at 33-52 threads the bilayer; that stretch reads SGKSQVLFAVVFTARYLDLF. The interval 47-48 is interaction with the K-D-E-L motif on target proteins; that stretch reads RY. Over 53 to 58 the chain is Lumenal; it reads TNYISL. Residues 59–79 traverse the membrane as a helical segment; it reads YNTCMKVVYIACSFTTVWMIY. Residues 80-92 are Cytoplasmic-facing; it reads SKFKATYDGNHDT. The helical transmembrane segment at 93-110 threads the bilayer; that stretch reads FRVEFLVVPTAVLAFLVN. The Lumenal portion of the chain corresponds to 111 to 116; that stretch reads HDFTPL. A helical transmembrane segment spans residues 117-135; it reads EILWTFSIYLESVAILPQL. At 136–149 the chain is on the cytoplasmic side; that stretch reads FMVSKTGEAETITS. The helical transmembrane segment at 150–168 threads the bilayer; the sequence is HYLFALGVYRTLYLFNWIW. Residues 159–169 form an interaction with the K-D-E-L motif on target proteins region; sequence RTLYLFNWIWR. Over 169-178 the chain is Lumenal; the sequence is RYHFEGFFDL. A helical membrane pass occupies residues 179–199; sequence IAIVAGLVQTVLYCDFFYLYI. Over 200–212 the chain is Cytoplasmic; that stretch reads TKVLKGKKLSLPA. The tract at residues 204 to 207 is important for recycling of cargo proteins with the sequence motif K-D-E-L from the Golgi to the endoplasmic reticulum; sequence KGKK. Serine 209 bears the Phosphoserine; by PKA mark.

This sequence belongs to the ERD2 family. In terms of assembly, upon ligand binding the receptor oligomerizes and interacts with components of the transport machinery such as ARFGAP1 and ARF1. Phosphorylation by PKA at Ser-209 is required for endoplasmic reticulum retention function.

Its subcellular location is the golgi apparatus membrane. The protein localises to the cytoplasmic vesicle. It localises to the COPI-coated vesicle membrane. The protein resides in the endoplasmic reticulum membrane. It is found in the endoplasmic reticulum-Golgi intermediate compartment membrane. Its function is as follows. Receptor for the C-terminal sequence motif K-D-E-L that is present on endoplasmic reticulum resident proteins and that mediates their recycling from the Golgi back to the endoplasmic reticulum. This chain is ER lumen protein-retaining receptor 1 (Kdelr1), found in Rattus norvegicus (Rat).